The chain runs to 202 residues: LexA repressor (202 aa).

A DNA-binding region (H-T-H motif) is located at residues 28–48; that stretch reads RAEIAQRLGFRSPNAAEEHLK. Active-site for autocatalytic cleavage activity residues include serine 119 and lysine 156.

It belongs to the peptidase S24 family. Homodimer.

It carries out the reaction Hydrolysis of Ala-|-Gly bond in repressor LexA.. Represses a number of genes involved in the response to DNA damage (SOS response), including recA and lexA. Binds to the 16 bp palindromic sequence 5'-CTGTATATATATACAG-3'. In the presence of single-stranded DNA, RecA interacts with LexA causing an autocatalytic cleavage which disrupts the DNA-binding part of LexA, leading to derepression of the SOS regulon and eventually DNA repair. This is LexA repressor from Escherichia fergusonii (strain ATCC 35469 / DSM 13698 / CCUG 18766 / IAM 14443 / JCM 21226 / LMG 7866 / NBRC 102419 / NCTC 12128 / CDC 0568-73).